The chain runs to 268 residues: Undecaprenyl-diphosphatase (268 aa).

7 helical membrane passes run 47 to 67 (FAVL…FSKL), 85 to 105 (IGVL…GGLI), 109 to 129 (LFNP…LLWV), 144 to 164 (FPLP…FPGV), 184 to 204 (AAEF…VYDL), 217 to 237 (LIVA…VKTF), and 246 to 266 (FALF…ALAL).

This sequence belongs to the UppP family.

It is found in the cell inner membrane. It catalyses the reaction di-trans,octa-cis-undecaprenyl diphosphate + H2O = di-trans,octa-cis-undecaprenyl phosphate + phosphate + H(+). Functionally, catalyzes the dephosphorylation of undecaprenyl diphosphate (UPP). Confers resistance to bacitracin. This Rhodopseudomonas palustris (strain BisA53) protein is Undecaprenyl-diphosphatase.